A 398-amino-acid chain; its full sequence is S-adenosylmethionine synthase (398 aa).

His17 is a binding site for ATP. Asp19 lines the Mg(2+) pocket. Glu45 is a K(+) binding site. Residues Glu58 and Gln101 each coordinate L-methionine. Residues 101–111 are flexible loop; that stretch reads QSPDIAQGVDT. ATP is bound by residues 176 to 178, 243 to 244, Asp252, 258 to 259, and Lys279; these read DGK, RF, and RK. Asp252 provides a ligand contact to L-methionine. Lys283 contacts L-methionine.

The protein belongs to the AdoMet synthase family. Homotetramer; dimer of dimers. It depends on Mg(2+) as a cofactor. The cofactor is K(+).

The protein resides in the cytoplasm. The enzyme catalyses L-methionine + ATP + H2O = S-adenosyl-L-methionine + phosphate + diphosphate. Its pathway is amino-acid biosynthesis; S-adenosyl-L-methionine biosynthesis; S-adenosyl-L-methionine from L-methionine: step 1/1. In terms of biological role, catalyzes the formation of S-adenosylmethionine (AdoMet) from methionine and ATP. The overall synthetic reaction is composed of two sequential steps, AdoMet formation and the subsequent tripolyphosphate hydrolysis which occurs prior to release of AdoMet from the enzyme. The sequence is that of S-adenosylmethionine synthase from Staphylococcus saprophyticus subsp. saprophyticus (strain ATCC 15305 / DSM 20229 / NCIMB 8711 / NCTC 7292 / S-41).